The following is a 614-amino-acid chain: Putative N(6)-adenosine-methyltransferase MT-A70-like (614 aa).

Positions threonine 59–glutamine 78 are disordered. Low complexity predominate over residues proline 67–glutamine 78. S-adenosyl-L-methionine-binding positions include aspartate 391–isoleucine 392 and aspartate 409. The segment at arginine 479–histidine 492 is positively charged region required for RNA-binding. S-adenosyl-L-methionine-binding positions include lysine 526, arginine 549 to asparagine 552, and asparagine 562 to glutamine 563. Residues proline 589–methionine 614 form a disordered region. The span at valine 604–methionine 614 shows a compositional bias: polar residues.

This sequence belongs to the MT-A70-like family.

It is found in the nucleus. It carries out the reaction an adenosine in mRNA + S-adenosyl-L-methionine = an N(6)-methyladenosine in mRNA + S-adenosyl-L-homocysteine + H(+). In terms of biological role, putative N6-methyltransferase that methylates adenosine residues of some mRNAs. N6-methyladenosine (m6A), which is present at internal sites of some mRNAs, may play a role in the efficiency of mRNA splicing, transport or translation. This chain is Putative N(6)-adenosine-methyltransferase MT-A70-like, found in Medicago truncatula (Barrel medic).